Here is a 176-residue protein sequence, read N- to C-terminus: Ribosome maturation factor RimM (176 aa).

Positions 101 to 170 constitute a PRC barrel domain; sequence EGEYFESDLI…RITVELPEGL (70 aa).

This sequence belongs to the RimM family. As to quaternary structure, binds ribosomal protein uS19.

It localises to the cytoplasm. Functionally, an accessory protein needed during the final step in the assembly of 30S ribosomal subunit, possibly for assembly of the head region. Essential for efficient processing of 16S rRNA. May be needed both before and after RbfA during the maturation of 16S rRNA. It has affinity for free ribosomal 30S subunits but not for 70S ribosomes. The polypeptide is Ribosome maturation factor RimM (Solibacter usitatus (strain Ellin6076)).